Here is a 241-residue protein sequence, read N- to C-terminus: MAIIIPSRLSSTRLKQKPLQLIGSITLIERVFKQVNQAGLEHTYVATDSEEIASVITKVGGKVIFTDSAIPTGTDRTYEAFKLIPNNQNINYIVNVQGDMPFIEPSSILKIIEYLKNSKYDIVTPIVKVDRESVKASSNVTVVVDSAGTALYFSRSLIPNGAEEFLYHVGMYGFRKNALEKFVSLKPTFLEKTERLEQLRALENGMTIGTCLVENVPISVDTEEDLKKAVKFYENISKLGL.

It belongs to the KdsB family.

The protein localises to the cytoplasm. The enzyme catalyses 3-deoxy-alpha-D-manno-oct-2-ulosonate + CTP = CMP-3-deoxy-beta-D-manno-octulosonate + diphosphate. Its pathway is nucleotide-sugar biosynthesis; CMP-3-deoxy-D-manno-octulosonate biosynthesis; CMP-3-deoxy-D-manno-octulosonate from 3-deoxy-D-manno-octulosonate and CTP: step 1/1. The protein operates within bacterial outer membrane biogenesis; lipopolysaccharide biosynthesis. In terms of biological role, activates KDO (a required 8-carbon sugar) for incorporation into bacterial lipopolysaccharide in Gram-negative bacteria. This chain is 3-deoxy-manno-octulosonate cytidylyltransferase, found in Rickettsia rickettsii (strain Sheila Smith).